A 763-amino-acid polypeptide reads, in one-letter code: Thyrotropin receptor (763 aa).

Positions 1–21 (MRQTPLLQLALLLSLPRSLGG) are cleaved as a signal peptide. Over 22-412 (KGCPSPPCEC…EFNPCEDIMG (391 aa)) the chain is Extracellular. A disulfide bond links Cys-31 and Cys-41. N-linked (GlcNAc...) asparagine glycans are attached at residues Asn-77 and Asn-99. 7 LRR repeats span residues 100 to 124 (LSKM…ALKE), 125 to 150 (LPLL…VYST), 151 to 174 (DVFF…AFQG), 176 to 199 (CNET…AFNG), 201 to 223 (KLDA…AFGG), 225 to 248 (YSGP…GLEH), and 264 to 288 (PLTL…AFKN). N-linked (GlcNAc...) asparagine glycosylation is found at Asn-177 and Asn-198. Residue Asn-302 is glycosylated (N-linked (GlcNAc...) asparagine). Residue Tyr-384 is modified to Sulfotyrosine. A helical transmembrane segment spans residues 413 to 440 (YKFLRIVVWFVSLLALLGNVFVLIILLT). Over 441–449 (SHYKLTVPR) the chain is Cytoplasmic. The chain crosses the membrane as a helical span at residues 450–472 (FLMCNLAFADFCMGMYLLLIASV). Residues 473–493 (DLYTHSEYYNHAIDWQTGPGC) are Extracellular-facing. A disulfide bond links Cys-493 and Cys-568. Residues 494 to 516 (NAAGFFTVFASELSVYTLTVITL) traverse the membrane as a helical segment. The Cytoplasmic segment spans residues 517-536 (ERWYAITFAMRLDRKMRLRH). The helical transmembrane segment at 537 to 559 (AYAIMVGGWVCCFLLALLPLVGI) threads the bilayer. At 560 to 579 (SSYAKVSICLPMDTETPLAL) the chain is on the extracellular side. A helical membrane pass occupies residues 580-601 (AYIILVLLLNIVAFIIVCSCYV). Over 602–624 (KIYITVRNPQYNTGDKDTKIAKR) the chain is Cytoplasmic. A helical membrane pass occupies residues 625-648 (MAVLIFTDFMCMAPISFYALSALM). Topologically, residues 649–659 (NKPLITVTNSK) are extracellular. The helical transmembrane segment at 660–681 (ILLVLFYPLNSCANPFLYAIFT) threads the bilayer. Over 682–763 (KTFQRDVFIL…ISKEYNQTVL (82 aa)) the chain is Cytoplasmic. Residues 761 to 763 (TVL) carry the PDZ-binding motif.

Belongs to the G-protein coupled receptor 1 family. FSH/LSH/TSH subfamily. Interacts with heterodimer GPHA2:GPHB5; this interaction stimulates cAMP production. Interacts (via the PDZ-binding motif) with SCRIB; regulates TSHR trafficking and function. In terms of processing, glycosylated. Sulfated. Sulfation on Tyr-384 plays a role in thyrotropin receptor binding and activation.

It localises to the cell membrane. It is found in the basolateral cell membrane. Functionally, receptor for the thyroid-stimulating hormone (TSH) or thyrotropin. Also acts as a receptor for the heterodimeric glycoprotein hormone (GPHA2:GPHB5) or thyrostimulin. The activity of this receptor is mediated by G proteins which activate adenylate cyclase. Plays a central role in controlling thyroid cell metabolism. The polypeptide is Thyrotropin receptor (TSHR) (Felis catus (Cat)).